Reading from the N-terminus, the 72-residue chain is Bradykinin-potentiating peptide BmKbpp (72 aa).

Residues 1 to 22 (MNKKTLLVIFFVTMLIVDEVNS) form the signal peptide. Residues 70–72 (RRR) constitute a propeptide that is removed on maturation.

Belongs to the non-disulfide-bridged peptide (NDBP) superfamily. Long chain multifunctional peptide (group 2) family. As to expression, expressed by the venom gland.

Its subcellular location is the secreted. Functionally, amphipathic peptide that shows bradykinin potentiating activity and antimicrobial activities against bacteria and fungi. Has higher antibacterial activities against Gram-negative than against Gram-positive bacteria. Also inhibits NADPH oxidase-dependent superoxide production (IC(50) is 0.4 uM on granulocytes stimulated with PMA, IC(50) is 0.51 uM on HL-60 cells undifferentiated and IC(50) is 0.53 uM on HL-60 cells treated with DMSO). The C-terminal peptide shows a higher bradykinin potentiating activity than the complete peptide. In Olivierus martensii (Manchurian scorpion), this protein is Bradykinin-potentiating peptide BmKbpp.